The following is a 1393-amino-acid chain: DNA-directed RNA polymerase subunit beta' (1393 aa).

4 residues coordinate Zn(2+): cysteine 72, cysteine 74, cysteine 87, and cysteine 90. Mg(2+) contacts are provided by aspartate 463, aspartate 465, and aspartate 467. Zn(2+) is bound by residues cysteine 812, cysteine 887, cysteine 894, and cysteine 897.

This sequence belongs to the RNA polymerase beta' chain family. In terms of assembly, the RNAP catalytic core consists of 2 alpha, 1 beta, 1 beta' and 1 omega subunit. When a sigma factor is associated with the core the holoenzyme is formed, which can initiate transcription. The cofactor is Mg(2+). Requires Zn(2+) as cofactor.

It catalyses the reaction RNA(n) + a ribonucleoside 5'-triphosphate = RNA(n+1) + diphosphate. DNA-dependent RNA polymerase catalyzes the transcription of DNA into RNA using the four ribonucleoside triphosphates as substrates. The protein is DNA-directed RNA polymerase subunit beta' of Chlamydia felis (strain Fe/C-56) (Chlamydophila felis).